The sequence spans 750 residues: Photosystem I P700 chlorophyll a apoprotein A1 (750 aa).

The next 8 membrane-spanning stretches (helical) occupy residues 70–93 (VFSAHFGQLSIIFLWLSGMYFHGA), 156–179 (LYCTAIGALVFAALMLFAGWFHYH), 195–219 (LNHHLAGLLGLGSLSWAGHQVHVSL), 291–309 (IAHHHLAIAILFLIAGHMY), 346–369 (WHAQLSLNLAMLGSLTIIVAHHMY), 385–411 (LSLFTHHMWIGGFLIVGAAAHAAIFMV), 433–455 (AIISHLNWVCIFLGFHSFGLYIH), and 531–549 (FLVHHIHAFTIHVTVLILL). [4Fe-4S] cluster-binding residues include Cys-573 and Cys-582. The next 2 membrane-spanning stretches (helical) occupy residues 589 to 610 (HVFLGLFWMYNAISVVIFHFSW) and 664 to 686 (LSAYGLFFLGAHFVWAFSLMFLF). Residue His-675 coordinates chlorophyll a'. 2 residues coordinate chlorophyll a: Met-683 and Tyr-691. Phylloquinone is bound at residue Trp-692. The helical transmembrane segment at 724 to 744 (AVGVTHYLLGGIATTWAFFLA) threads the bilayer.

It belongs to the PsaA/PsaB family. The PsaA/B heterodimer binds the P700 chlorophyll special pair and subsequent electron acceptors. PSI consists of a core antenna complex that captures photons, and an electron transfer chain that converts photonic excitation into a charge separation. The eukaryotic PSI reaction center is composed of at least 11 subunits. P700 is a chlorophyll a/chlorophyll a' dimer, A0 is one or more chlorophyll a, A1 is one or both phylloquinones and FX is a shared 4Fe-4S iron-sulfur center. is required as a cofactor.

The protein resides in the plastid. The protein localises to the chloroplast thylakoid membrane. The catalysed reaction is reduced [plastocyanin] + hnu + oxidized [2Fe-2S]-[ferredoxin] = oxidized [plastocyanin] + reduced [2Fe-2S]-[ferredoxin]. Its function is as follows. PsaA and PsaB bind P700, the primary electron donor of photosystem I (PSI), as well as the electron acceptors A0, A1 and FX. PSI is a plastocyanin-ferredoxin oxidoreductase, converting photonic excitation into a charge separation, which transfers an electron from the donor P700 chlorophyll pair to the spectroscopically characterized acceptors A0, A1, FX, FA and FB in turn. Oxidized P700 is reduced on the lumenal side of the thylakoid membrane by plastocyanin. The protein is Photosystem I P700 chlorophyll a apoprotein A1 of Olimarabidopsis pumila (Dwarf rocket).